A 42-amino-acid chain; its full sequence is MSKIKQPISYPIFTFRWLAIHGLAVPTVFFLGAITSMQFIQR.

A helical membrane pass occupies residues 17–33 (WLAIHGLAVPTVFFLGA). His21 lines the heme pocket.

Belongs to the PsbE/PsbF family. In terms of assembly, heterodimer of an alpha subunit and a beta subunit. PSII is composed of 1 copy each of membrane proteins PsbA, PsbB, PsbC, PsbD, PsbE, PsbF, PsbH, PsbI, PsbJ, PsbK, PsbL, PsbM, PsbT, PsbX, PsbY, PsbZ, Psb30/Ycf12, at least 3 peripheral proteins of the oxygen-evolving complex and a large number of cofactors. It forms dimeric complexes. Heme b serves as cofactor.

It localises to the plastid. The protein localises to the chloroplast thylakoid membrane. This b-type cytochrome is tightly associated with the reaction center of photosystem II (PSII). PSII is a light-driven water:plastoquinone oxidoreductase that uses light energy to abstract electrons from H(2)O, generating O(2) and a proton gradient subsequently used for ATP formation. It consists of a core antenna complex that captures photons, and an electron transfer chain that converts photonic excitation into a charge separation. This chain is Cytochrome b559 subunit beta, found in Guillardia theta (Cryptophyte).